The following is a 254-amino-acid chain: UPF0173 protein YddR (254 aa).

Belongs to the UPF0173 family.

This is UPF0173 protein YddR (yddR) from Bacillus subtilis (strain 168).